The chain runs to 393 residues: Elongation factor Tu (393 aa).

Residues 10-203 (KPHVNIGTIG…AVDSYIPQPV (194 aa)) form the tr-type G domain. The tract at residues 19–26 (GHVDHGKT) is G1. Residue 19–26 (GHVDHGKT) coordinates GTP. Thr-26 contacts Mg(2+). The interval 60–64 (GITIS) is G2. The segment at 81 to 84 (DCPG) is G3. Residues 81-85 (DCPGH) and 136-139 (NKVD) contribute to the GTP site. The tract at residues 136–139 (NKVD) is G4. The interval 173 to 175 (SAL) is G5.

It belongs to the TRAFAC class translation factor GTPase superfamily. Classic translation factor GTPase family. EF-Tu/EF-1A subfamily. As to quaternary structure, monomer.

The protein resides in the cytoplasm. It catalyses the reaction GTP + H2O = GDP + phosphate + H(+). Functionally, GTP hydrolase that promotes the GTP-dependent binding of aminoacyl-tRNA to the A-site of ribosomes during protein biosynthesis. The protein is Elongation factor Tu of Chlorobaculum tepidum (strain ATCC 49652 / DSM 12025 / NBRC 103806 / TLS) (Chlorobium tepidum).